Reading from the N-terminus, the 205-residue chain is Thymidine kinase (205 aa).

ATP-binding positions include 9–16 (SAMNAGKT) and 88–91 (DECH). E89 serves as the catalytic Proton acceptor. 4 residues coordinate Zn(2+): C146, C148, C183, and H186.

This sequence belongs to the thymidine kinase family. Homotetramer.

It is found in the cytoplasm. It catalyses the reaction thymidine + ATP = dTMP + ADP + H(+). The chain is Thymidine kinase from Blochmanniella pennsylvanica (strain BPEN).